Here is an 83-residue protein sequence, read N- to C-terminus: Small ribosomal subunit protein uS17 (83 aa).

This sequence belongs to the universal ribosomal protein uS17 family. In terms of assembly, part of the 30S ribosomal subunit.

One of the primary rRNA binding proteins, it binds specifically to the 5'-end of 16S ribosomal RNA. This Acaryochloris marina (strain MBIC 11017) protein is Small ribosomal subunit protein uS17.